The following is a 92-amino-acid chain: Small ribosomal subunit protein uS19c (92 aa).

This sequence belongs to the universal ribosomal protein uS19 family.

It localises to the plastid. The protein localises to the chloroplast. In terms of biological role, protein S19 forms a complex with S13 that binds strongly to the 16S ribosomal RNA. The chain is Small ribosomal subunit protein uS19c from Panax ginseng (Korean ginseng).